A 504-amino-acid chain; its full sequence is D-alanine--D-alanyl carrier protein ligase (504 aa).

An ATP-binding site is contributed by 152–153 (TS). Asp-197 contacts D-alanine. 292-297 (NTYGPT) contacts ATP. Val-301 contributes to the D-alanine binding site. ATP-binding positions include Asp-383, 394-397 (YNGR), and Lys-492. Lys-492 serves as a coordination point for D-alanine.

It belongs to the ATP-dependent AMP-binding enzyme family. DltA subfamily.

It is found in the cytoplasm. It carries out the reaction holo-[D-alanyl-carrier protein] + D-alanine + ATP = D-alanyl-[D-alanyl-carrier protein] + AMP + diphosphate. It participates in cell wall biogenesis; lipoteichoic acid biosynthesis. Functionally, catalyzes the first step in the D-alanylation of lipoteichoic acid (LTA), the activation of D-alanine and its transfer onto the D-alanyl carrier protein (Dcp) DltC. In an ATP-dependent two-step reaction, forms a high energy D-alanyl-AMP intermediate, followed by transfer of the D-alanyl residue as a thiol ester to the phosphopantheinyl prosthetic group of the Dcp. D-alanylation of LTA plays an important role in modulating the properties of the cell wall in Gram-positive bacteria, influencing the net charge of the cell wall. The sequence is that of D-alanine--D-alanyl carrier protein ligase from Bacillus cereus (strain ATCC 10987 / NRS 248).